We begin with the raw amino-acid sequence, 423 residues long: Serine--tRNA ligase (423 aa).

An L-serine-binding site is contributed by T231–E233. ATP is bound at residue R262–E264. Residue E285 coordinates L-serine. E349 to S352 lines the ATP pocket. S384 serves as a coordination point for L-serine.

This sequence belongs to the class-II aminoacyl-tRNA synthetase family. Type-1 seryl-tRNA synthetase subfamily. In terms of assembly, homodimer. The tRNA molecule binds across the dimer.

The protein localises to the cytoplasm. It carries out the reaction tRNA(Ser) + L-serine + ATP = L-seryl-tRNA(Ser) + AMP + diphosphate + H(+). The enzyme catalyses tRNA(Sec) + L-serine + ATP = L-seryl-tRNA(Sec) + AMP + diphosphate + H(+). Its pathway is aminoacyl-tRNA biosynthesis; selenocysteinyl-tRNA(Sec) biosynthesis; L-seryl-tRNA(Sec) from L-serine and tRNA(Sec): step 1/1. Catalyzes the attachment of serine to tRNA(Ser). Is also able to aminoacylate tRNA(Sec) with serine, to form the misacylated tRNA L-seryl-tRNA(Sec), which will be further converted into selenocysteinyl-tRNA(Sec). The polypeptide is Serine--tRNA ligase (Lactococcus lactis subsp. cremoris (strain SK11)).